Reading from the N-terminus, the 392-residue chain is Small ribosomal subunit protein bS1 (392 aa).

4 S1 motif domains span residues 16-90 (GDKV…LSKR), 108-173 (DEVI…LSRK), 194-262 (GDVI…LSIK), and 279-348 (DDVI…LSIK). The disordered stretch occupies residues 361–380 (ASTTQSYLEDDNDEDKPTLG).

The protein belongs to the bacterial ribosomal protein bS1 family.

Binds mRNA; thus facilitating recognition of the initiation point. It is needed to translate mRNA with a short Shine-Dalgarno (SD) purine-rich sequence. This is Small ribosomal subunit protein bS1 (rpsA) from Staphylococcus epidermidis (strain ATCC 35984 / DSM 28319 / BCRC 17069 / CCUG 31568 / BM 3577 / RP62A).